The primary structure comprises 298 residues: tRNA dimethylallyltransferase (298 aa).

16–23 provides a ligand contact to ATP; that stretch reads GPTASGKS. Substrate is bound at residue 18–23; the sequence is TASGKS. Interaction with substrate tRNA regions lie at residues 41 to 44 and 165 to 169; these read DSMQ and QRIVR.

This sequence belongs to the IPP transferase family. Monomer. Mg(2+) is required as a cofactor.

It carries out the reaction adenosine(37) in tRNA + dimethylallyl diphosphate = N(6)-dimethylallyladenosine(37) in tRNA + diphosphate. Functionally, catalyzes the transfer of a dimethylallyl group onto the adenine at position 37 in tRNAs that read codons beginning with uridine, leading to the formation of N6-(dimethylallyl)adenosine (i(6)A). The sequence is that of tRNA dimethylallyltransferase from Rhizobium radiobacter (Agrobacterium tumefaciens).